The chain runs to 496 residues: Putative aldehyde dehydrogenase-like protein C922.07c (496 aa).

241–246 (GSTKVG) serves as a coordination point for NAD(+). Glutamate 263 functions as the Proton acceptor in the catalytic mechanism. Cysteine 297 (nucleophile) is an active-site residue.

This sequence belongs to the aldehyde dehydrogenase family.

It is found in the cytoplasm. Its subcellular location is the nucleus. The protein is Putative aldehyde dehydrogenase-like protein C922.07c of Schizosaccharomyces pombe (strain 972 / ATCC 24843) (Fission yeast).